Reading from the N-terminus, the 276-residue chain is Putative ABC transporter ATP-binding protein MA_4021 (276 aa).

An ABC transporter domain is found at 5–247; it reads FDLKNISYSY…DLNLLLSTNL (243 aa). Residue 38–45 participates in ATP binding; the sequence is GSNGSGKS.

Belongs to the ABC transporter superfamily.

It is found in the cell membrane. Its function is as follows. Probably part of an ABC transporter complex. Responsible for energy coupling to the transport system. The protein is Putative ABC transporter ATP-binding protein MA_4021 of Methanosarcina acetivorans (strain ATCC 35395 / DSM 2834 / JCM 12185 / C2A).